Here is a 122-residue protein sequence, read N- to C-terminus: Large ribosomal subunit protein uL14 (122 aa).

This sequence belongs to the universal ribosomal protein uL14 family. In terms of assembly, part of the 50S ribosomal subunit. Forms a cluster with proteins L3 and L19. In the 70S ribosome, L14 and L19 interact and together make contacts with the 16S rRNA in bridges B5 and B8.

In terms of biological role, binds to 23S rRNA. Forms part of two intersubunit bridges in the 70S ribosome. This is Large ribosomal subunit protein uL14 from Bordetella avium (strain 197N).